The sequence spans 55 residues: Mitochondrial import receptor subunit TOM7 homolog (55 aa).

Residues 1–20 (MVKLSKEAKQRLQQLFKGGQ) lie on the Cytoplasmic side of the membrane. Residues 21 to 40 (FAIRWGFIPLVIYLGFTRGA) traverse the membrane as a helical segment. Over 41-55 (DPGMPEPSVLSLLWG) the chain is Mitochondrial intermembrane.

This sequence belongs to the Tom7 family. As to quaternary structure, forms part of the preprotein translocase complex of the outer mitochondrial membrane (TOM complex) which consists of at least 7 different proteins (TOMM5, TOMM6, TOMM7, TOMM20, TOMM22, TOMM40 and TOMM70).

It localises to the mitochondrion outer membrane. Its function is as follows. Required for assembly and stability of the TOM complex. Positive regulator of PRKN translocation to damaged mitochondria. Acts probably by stabilizing PINK1 on the outer membrane of depolarized mitochondria. The polypeptide is Mitochondrial import receptor subunit TOM7 homolog (Tomm7) (Mus musculus (Mouse)).